Reading from the N-terminus, the 484-residue chain is Probable UDP-N-acetylglucosamine pyrophosphorylase (484 aa).

Positions 107–110 (LAGG) match the Substrate binding motif. UTP is bound by residues 107–110 (LAGG), Lys-121, Gln-200, and Gly-226. Asn-227 provides a ligand contact to substrate. Asp-255 lines the UTP pocket. The short motif at 304-305 (EY) is the Substrate binding element. Residue Lys-377 participates in UTP binding. Lys-407 is a substrate binding site.

This sequence belongs to the UDPGP type 1 family.

The protein resides in the cytoplasm. It catalyses the reaction N-acetyl-alpha-D-glucosamine 1-phosphate + UTP + H(+) = UDP-N-acetyl-alpha-D-glucosamine + diphosphate. The protein operates within nucleotide-sugar biosynthesis; UDP-N-acetyl-alpha-D-glucosamine biosynthesis; UDP-N-acetyl-alpha-D-glucosamine from N-acetyl-alpha-D-glucosamine 1-phosphate: step 1/1. This chain is Probable UDP-N-acetylglucosamine pyrophosphorylase, found in Caenorhabditis elegans.